Here is a 635-residue protein sequence, read N- to C-terminus: MITVRLPDGSQREFDTPVTVAQVAANIGAGLAKAALAGKVNGNVVDTSYLIEQDSDLSIITDKDAEGLDVIRHSTAHLLAYAVKELFPDAQVTIGPVIENGFYYDFSYKRPFTPEDLLAIEKKMAELAKKDEPVTRQVLPRDVAVEYFKSIGEAYKAEIIASIPADQDVSLYTEGKFTDLCRGPHVPSTGKLKVFKLMKLAGAYWRGDSKNEMLQRIYGTAWAKKEEQEAYLTMLEEAEKRDHRKLGRALDLFHFQEEAPGLIFWHPKGWTVWQQVEQYMRRVYQDNGYQEVKAPQILDRSLWEKSGHWENYKENMFTTESENRSYALKPMNCPGHVQIFASDLRSYRELPLRYGEFGQCHRNEPSGSLHGMMRVRGFTQDDGHIFCTEDQILDECVAFTALLQKVYRDFGFTNVIYKVATRPEKRVGSDEAWDKAEAALIASLDRSGCTYEISPGEGAFYGPKIEYTLKDAIGRMWQCGTIQVDFSMPARLGAEYVAEDNTKKIPVMLHRAILGSFERFIGMLIENHAGALPLWLAPVQIAVLNISDAQADYAQAVAQNLKKQGFRVHVDLRNEKITYKIREHSIQKLPYIIVIGDKERDAGTVAVRARGNVDLGVMPVDLLVERLNNEVEAKA.

The region spanning 1–61 is the TGS domain; the sequence is MITVRLPDGS…EQDSDLSIIT (61 aa). The catalytic stretch occupies residues 242–533; that stretch reads DHRKLGRALD…LIENHAGALP (292 aa). The Zn(2+) site is built by Cys333, His384, and His510.

Belongs to the class-II aminoacyl-tRNA synthetase family. As to quaternary structure, homodimer. It depends on Zn(2+) as a cofactor.

It localises to the cytoplasm. It carries out the reaction tRNA(Thr) + L-threonine + ATP = L-threonyl-tRNA(Thr) + AMP + diphosphate + H(+). In terms of biological role, catalyzes the attachment of threonine to tRNA(Thr) in a two-step reaction: L-threonine is first activated by ATP to form Thr-AMP and then transferred to the acceptor end of tRNA(Thr). Also edits incorrectly charged L-seryl-tRNA(Thr). The polypeptide is Threonine--tRNA ligase (Herminiimonas arsenicoxydans).